The sequence spans 421 residues: Histidine--tRNA ligase (421 aa).

Belongs to the class-II aminoacyl-tRNA synthetase family.

It is found in the cytoplasm. The catalysed reaction is tRNA(His) + L-histidine + ATP = L-histidyl-tRNA(His) + AMP + diphosphate + H(+). This chain is Histidine--tRNA ligase, found in Pyrobaculum calidifontis (strain DSM 21063 / JCM 11548 / VA1).